A 647-amino-acid polypeptide reads, in one-letter code: uncharacterized protein (647 aa).

The next 5 helical transmembrane spans lie at 14–38, 61–78, 90–110, 140–158, and 178–195; these read LFPI…LAVW, VVAL…TTLF, LWLT…PAFI, LSAV…VIYW, and VIAL…RSSF.

The protein resides in the cell membrane. This is an uncharacterized protein from Haemophilus influenzae (strain ATCC 51907 / DSM 11121 / KW20 / Rd).